The sequence spans 224 residues: Ribonuclease HII (224 aa).

Residues 1–210 form the RNase H type-2 domain; it reads MKVAGADEAG…AKKIEEKFKR (210 aa). Positions 7, 8, and 105 each coordinate a divalent metal cation.

This sequence belongs to the RNase HII family. Mn(2+) serves as cofactor. Requires Mg(2+) as cofactor.

Its subcellular location is the cytoplasm. It carries out the reaction Endonucleolytic cleavage to 5'-phosphomonoester.. Endonuclease that specifically degrades the RNA of RNA-DNA hybrids. This Pyrococcus abyssi (strain GE5 / Orsay) protein is Ribonuclease HII (rnhB).